We begin with the raw amino-acid sequence, 345 residues long: Beta-2-glycoprotein 1 (345 aa).

A signal peptide spans 1 to 19 (MISLGLILFSSVLCHVATA). Sushi domains lie at 21 to 81 (RTCP…RCIP), 82 to 139 (RVCP…VCTR), 140 to 202 (VTCP…ECRE), and 203 to 262 (VKCP…SCKA). 11 disulfides stabilise this stretch: Cys23/Cys66, Cys51/Cys79, Cys84/Cys124, Cys110/Cys137, Cys142/Cys188, Cys174/Cys200, Cys205/Cys248, Cys234/Cys260, Cys264/Cys315, Cys300/Cys325, and Cys307/Cys345. Thr33 carries an O-linked (GalNAc...) threonine glycan. Residues Asn117, Asn162, Asn183, and Asn193 are each glycosylated (N-linked (GlcNAc...) asparagine). Asn253 is a glycosylation site (N-linked (GlcNAc...) asparagine). The tract at residues 263 to 345 (SCKLSVKKAT…KTDASDVKPC (83 aa)) is sushi-like.

In terms of tissue distribution, expressed by the liver and secreted in plasma.

The protein localises to the secreted. Its function is as follows. Binds to various kinds of negatively charged substances such as heparin, phospholipids, and dextran sulfate. May prevent activation of the intrinsic blood coagulation cascade by binding to phospholipids on the surface of damaged cells. In Canis lupus familiaris (Dog), this protein is Beta-2-glycoprotein 1 (APOH).